Here is a 105-residue protein sequence, read N- to C-terminus: U2-lycotoxin-Ls1d (105 aa).

The N-terminal stretch at 1-17 (MIKYVLISALLVVAVYS) is a signal peptide. Residues 18 to 41 (FTIEDNEDALLEEAEDELDTEEER) constitute a propeptide that is removed on maturation. Intrachain disulfides connect C51–C67, C58–C97, C60–C83, and C69–C81.

It belongs to the neurotoxin 04 (omega-agtx) family. 01 (type I omega-agtx) subfamily. As to expression, expressed by the venom gland.

It localises to the secreted. Insecticidal to house crickets. It induces an excitatory slow-onset impact that leads to irreversible spastic paralysis. It also modifies human voltage-gated potassium channel Kv1.5/KCNA5. Most likely, it binds to the voltage-sensing domain of the channel, suggesting it does not block the pore but prevents its opening at physiological membrane potentials. The recombinant peptide binds to the channel in an irreversible manner and slows down the hKv1.5 current activation kinetics. It is not toxic to mice, when intracranially injected (at 0.5 ug/g mouse). The polypeptide is U2-lycotoxin-Ls1d (Lycosa singoriensis (Wolf spider)).